The primary structure comprises 205 residues: Small ribosomal subunit protein uS4 (205 aa).

The segment covering 1-16 (MSKRESSKYKIDRRMG) has biased composition (basic and acidic residues). Residues 1-46 (MSKRESSKYKIDRRMGENIWGRPKSPVNRREYGPGQHGQRRKGKLS) form a disordered region. In terms of domain architecture, S4 RNA-binding spans 94-157 (SRLDAIVYRA…KQLVIVLEAV (64 aa)).

Belongs to the universal ribosomal protein uS4 family. In terms of assembly, part of the 30S ribosomal subunit. Contacts protein S5. The interaction surface between S4 and S5 is involved in control of translational fidelity.

One of the primary rRNA binding proteins, it binds directly to 16S rRNA where it nucleates assembly of the body of the 30S subunit. In terms of biological role, with S5 and S12 plays an important role in translational accuracy. The chain is Small ribosomal subunit protein uS4 from Rhizobium johnstonii (strain DSM 114642 / LMG 32736 / 3841) (Rhizobium leguminosarum bv. viciae).